The chain runs to 470 residues: Argininosuccinate lyase (470 aa).

This sequence belongs to the lyase 1 family. Argininosuccinate lyase subfamily.

The protein localises to the cytoplasm. It catalyses the reaction 2-(N(omega)-L-arginino)succinate = fumarate + L-arginine. The protein operates within amino-acid biosynthesis; L-arginine biosynthesis; L-arginine from L-ornithine and carbamoyl phosphate: step 3/3. The polypeptide is Argininosuccinate lyase (Mycobacterium marinum (strain ATCC BAA-535 / M)).